A 931-amino-acid chain; its full sequence is Protocadherin gamma-B2 (931 aa).

Positions 1–30 (MKASSGRCGLVRWLQVLLPFLLSLFPGALP) are cleaved as a signal peptide. 6 consecutive Cadherin domains span residues 31–133 (VQIR…TPLF), 134–242 (KQTK…PPVF), 243–347 (SQDV…APEV), 348–452 (IVTS…APVF), 453–562 (QQTS…APRV), and 570–675 (DGSA…LPDL). Residues 31 to 691 (VQIRYSIPEE…SDPQAKLQFY (661 aa)) are Extracellular-facing. Residues Asn419 and Asn545 are each glycosylated (N-linked (GlcNAc...) asparagine). Residues 692 to 712 (LVVALALISVLFFLAVILAIS) traverse the membrane as a helical segment. The Cytoplasmic segment spans residues 713-931 (LRLRLSSRSD…KKKSGKKEKK (219 aa)). Disordered stretches follow at residues 814–840 (DWRFSQAQRPGTSGSQNGDDTGTWPNN) and 901–931 (ATLTNAAGKRDGKAPAGGNGNKKKSGKKEKK). Residues 815–840 (WRFSQAQRPGTSGSQNGDDTGTWPNN) show a composition bias toward polar residues. A compositionally biased stretch (basic residues) spans 921–931 (NKKKSGKKEKK).

The protein resides in the cell membrane. Functionally, potential calcium-dependent cell-adhesion protein. May be involved in the establishment and maintenance of specific neuronal connections in the brain. The chain is Protocadherin gamma-B2 (PCDHGB2) from Homo sapiens (Human).